The following is an 82-amino-acid chain: Small ribosomal subunit protein uS17 (82 aa).

The protein belongs to the universal ribosomal protein uS17 family. Part of the 30S ribosomal subunit.

In terms of biological role, one of the primary rRNA binding proteins, it binds specifically to the 5'-end of 16S ribosomal RNA. In Shewanella denitrificans (strain OS217 / ATCC BAA-1090 / DSM 15013), this protein is Small ribosomal subunit protein uS17.